The primary structure comprises 648 residues: DNA ligase (648 aa).

NAD(+)-binding positions include 63 to 67 (DILYD) and 105 to 106 (ST). Lys143 serves as the catalytic N6-AMP-lysine intermediate. Residues Arg159, Glu190, and Lys302 each coordinate NAD(+). Zn(2+) contacts are provided by Cys390, Cys393, Cys406, and Cys412. In terms of domain architecture, BRCT spans 570–648 (SLASPLTGKI…SEQEYLDLIS (79 aa)).

It belongs to the NAD-dependent DNA ligase family. LigA subfamily. Requires Mg(2+) as cofactor. The cofactor is Mn(2+).

It catalyses the reaction NAD(+) + (deoxyribonucleotide)n-3'-hydroxyl + 5'-phospho-(deoxyribonucleotide)m = (deoxyribonucleotide)n+m + AMP + beta-nicotinamide D-nucleotide.. Functionally, DNA ligase that catalyzes the formation of phosphodiester linkages between 5'-phosphoryl and 3'-hydroxyl groups in double-stranded DNA using NAD as a coenzyme and as the energy source for the reaction. It is essential for DNA replication and repair of damaged DNA. This chain is DNA ligase, found in Shewanella baltica (strain OS155 / ATCC BAA-1091).